A 3677-amino-acid chain; its full sequence is Dystrophin (3677 aa).

An actin-binding region spans residues 1-240; sequence MLWWEEVEDC…YITSLFQVLP (240 aa). Calponin-homology (CH) domains follow at residues 15-119 and 134-240; these read DVQK…LHWQ and TNSE…QVLP. The segment at 63–72 is ANK2- and ANK-3 binding; that stretch reads PKEKGSTRVH. Spectrin repeat units lie at residues 342–447, 451–557, 560–668, 728–828, 831–935, 944–1046, 1049–1154, 1163–1264, 1268–1464, 1469–1569, 1573–1676, 1680–1777, 1779–1875, 1878–1980, 2001–2098, 2106–2209, 2215–2316, 2317–2415, 2465–2569, 2576–2678, 2682–2786, 2800–2922, and 2927–3032; these read LDSY…SNLH, MDLQ…LLQD, LKWQ…QISQ, DITE…NWLE, NNII…ELQT, RYQE…KLEE, NKLR…EALK, LQKD…TLEE, CWHE…LFQK, EQRL…QLEK, LSRK…NLLL, KHME…TGKA, IPLK…KALE, HQWY…TLHE, YLTE…ERQG, KWRH…RVEE, SEFQ…GELE, VHIK…LRTK, ADFN…QLNE, QWLE…ALEE, LLQQ…KKSL, KRLH…RKID, and RLQE…QLHE. Residues 1416-1914 are interaction with SYNM; it reads SDLTSHEISL…PEPRDERKIK (499 aa). Positions 3047–3080 constitute a WW domain; that stretch reads TSVQGPWERAISPNKVPYYINHETQTTCWDHPKM. Residues 3050-3400 are interaction with SYNM; it reads QGPWERAISP…TVLEGDNMET (351 aa). The ZZ-type; degenerate zinc finger occupies 3300-3356; the sequence is KHQAKCNICKECPIIGFRYRSLKHFNYDICQSCFFSGRVAKGHKMHYPMVEYCTPTT. Cys3305, Cys3308, Cys3329, and Cys3332 together coordinate Zn(2+). Residues 3458–3510 are binds to SNTB1; sequence DDEHLLIQHYCQSLNQDSPLSQPRSPAQILISLESEERGELERILADLEEENR. Residues Ser3475, Ser3482, and Ser3492 each carry the phosphoserine modification. Disordered stretches follow at residues 3520-3546 and 3595-3677; these read KQQH…QSPR and EAKV…EDTM. 2 stretches are compositionally biased toward polar residues: residues 3599-3618 and 3654-3664; these read NGTT…SSQP and QLNNSFPSSRG. 6 positions are modified to phosphoserine: Ser3604, Ser3605, Ser3609, Ser3615, Ser3616, and Ser3658.

In terms of assembly, interacts with SYNM. Interacts with the syntrophins SNTG1 and SNTG2. Interacts with KRT19. Component of the dystrophin-associated glycoprotein complex which is composed of three subcomplexes: a cytoplasmic complex comprised of DMD (or UTRN), DTNA and a number of syntrophins, such as SNTB1, SNTB2, SNTG1 and SNTG2, the transmembrane dystroglycan complex, and the sarcoglycan-sarcospan complex. Interacts with DAG1 (betaDAG1) with DMD; the interaction is inhibited by phosphorylation on the PPXY motif of DAG1. Interacts with SYNM; SNTA1 and SNTB1. Interacts with CMYA5. Directly interacts with ANK2 and ANK3; these interactions do not interfere with betaDAG1-binding and are necessary for proper localization in muscle cells. Identified in a dystroglycan complex that contains at least PRX, DRP2, UTRN, DMD and DAG1. Interacts with DTNB. Interacts with PGM5; the interaction is direct. Interacts with NOS1; localizes NOS1 to sarcolemma in muscle cells. In terms of tissue distribution, strongly expressed in skeletal muscle and weak expression observed in newborn brain which increases in adult brain.

It localises to the cell membrane. The protein resides in the sarcolemma. It is found in the cytoplasm. The protein localises to the cytoskeleton. Its subcellular location is the postsynaptic cell membrane. In terms of biological role, anchors the extracellular matrix to the cytoskeleton via F-actin. Ligand for dystroglycan. Component of the dystrophin-associated glycoprotein complex which accumulates at the neuromuscular junction (NMJ) and at a variety of synapses in the peripheral and central nervous systems and has a structural function in stabilizing the sarcolemma. Also implicated in signaling events and synaptic transmission. This Rattus norvegicus (Rat) protein is Dystrophin (Dmd).